The primary structure comprises 242 residues: Probable transcriptional regulatory protein Bcen2424_2294 (242 aa).

The protein belongs to the TACO1 family.

Its subcellular location is the cytoplasm. The chain is Probable transcriptional regulatory protein Bcen2424_2294 from Burkholderia cenocepacia (strain HI2424).